Consider the following 509-residue polypeptide: Glycogen synthase (509 aa).

An ADP-alpha-D-glucose-binding site is contributed by Lys47.

This sequence belongs to the glycosyltransferase 1 family. Bacterial/plant glycogen synthase subfamily.

The enzyme catalyses [(1-&gt;4)-alpha-D-glucosyl](n) + ADP-alpha-D-glucose = [(1-&gt;4)-alpha-D-glucosyl](n+1) + ADP + H(+). Its pathway is glycan biosynthesis; glycogen biosynthesis. Functionally, synthesizes alpha-1,4-glucan chains using ADP-glucose. This chain is Glycogen synthase, found in Xanthomonas euvesicatoria pv. vesicatoria (strain 85-10) (Xanthomonas campestris pv. vesicatoria).